Reading from the N-terminus, the 553-residue chain is Syntaxin-binding protein 4 (553 aa).

Phosphoserine is present on residues Ser10, Ser12, Ser99, and Ser212. One can recognise a PDZ domain in the interval 19–105 (AFQMITIAKE…RLESAWEIAF (87 aa)). Residues 291-417 (SSEADEMERL…VLDCQLRKSE (127 aa)) adopt a coiled-coil conformation. Ser463 carries the post-translational modification Phosphoserine. One can recognise a WW domain in the interval 496 to 529 (DCLPYGWEEAYTADGIKYFINHVTQTTSWIHPVM).

As to quaternary structure, interacts with STX4A. Phosphorylated on Ser-99 by PKB/AKT2 after insulin treatment. Phosphorylation on Ser-99 abolishes the interaction with STX4A.

The protein resides in the cytoplasm. Its function is as follows. Plays a role in the translocation of transport vesicles from the cytoplasm to the plasma membrane. Inhibits the translocation of SLC2A4 from intracellular vesicles to the plasma membrane by STX4A binding and preventing the interaction between STX4A and VAMP2. Stimulation with insulin disrupts the interaction with STX4A, leading to increased levels of SLC2A4 at the plasma membrane. May also play a role in the regulation of insulin release by pancreatic beta cells after stimulation by glucose. The chain is Syntaxin-binding protein 4 (STXBP4) from Homo sapiens (Human).